Reading from the N-terminus, the 577-residue chain is Sensory neuron membrane protein 2 (577 aa).

The Cytoplasmic segment spans residues 1-6; it reads MVQCTL. Residues 7–27 form a helical membrane-spanning segment; that stretch reads IWAGIGAMMAVSGALLGWVVF. Residues 28–519 lie on the Extracellular side of the membrane; sequence PRAVHEKVIE…LMKVLSLLDV (492 aa). N-linked (GlcNAc...) asparagine glycans are attached at residues asparagine 66, asparagine 161, asparagine 271, and asparagine 307. Disulfide bonds link cysteine 316/cysteine 384, cysteine 345/cysteine 411, and cysteine 386/cysteine 400. A helical membrane pass occupies residues 520-540; the sequence is VQWVLIGVGLLLAVLMPTVYF. The Cytoplasmic segment spans residues 541-577; the sequence is VKRCRGEGSRTVSPAVTATTSAASLSTVAGVTGDRSK.

This sequence belongs to the CD36 family.

It is found in the cell membrane. Functionally, plays an olfactory role that is not restricted to pheromone sensitivity. In Anopheles gambiae (African malaria mosquito), this protein is Sensory neuron membrane protein 2.